A 365-amino-acid polypeptide reads, in one-letter code: Flagellar P-ring protein (365 aa).

Residues 1-21 (MIKRIISIVFLLLTLPQLALA) form the signal peptide.

It belongs to the FlgI family. The basal body constitutes a major portion of the flagellar organelle and consists of four rings (L,P,S, and M) mounted on a central rod.

It localises to the periplasm. Its subcellular location is the bacterial flagellum basal body. Functionally, assembles around the rod to form the L-ring and probably protects the motor/basal body from shearing forces during rotation. The chain is Flagellar P-ring protein from Geobacter metallireducens (strain ATCC 53774 / DSM 7210 / GS-15).